Consider the following 68-residue polypeptide: U2-agatoxin-Ao1u (68 aa).

Residues 1 to 20 (MKAIISLLLISAMVFSMIEA) form the signal peptide. Positions 21–34 (VPLEEGLQLFEGER) are excised as a propeptide. 3 disulfide bridges follow: C36–C52, C43–C57, and C51–C67.

The protein belongs to the neurotoxin 01 (U2-agtx) family. As to expression, expressed by the venom gland.

It is found in the secreted. Its function is as follows. Insect active toxin causing rapid but reversible paralysis in crickets. No activity shown in mammals. Does not show effect on mammalian voltage-gated calcium channels. The sequence is that of U2-agatoxin-Ao1u from Agelena orientalis (Funnel-web spider).